Consider the following 598-residue polypeptide: Dihydroxy-acid dehydratase, mitochondrial (598 aa).

The N-terminal 18 residues, 1-18, are a transit peptide targeting the mitochondrion; that stretch reads MMFCKLLRCQNGIASKRA. [2Fe-2S] cluster is bound at residue Cys84. Asp116 lines the Mg(2+) pocket. Cys157 contacts [2Fe-2S] cluster. Asp158 lines the Mg(2+) pocket. Cys232 serves as a coordination point for [2Fe-2S] cluster. Glu485 is a Mg(2+) binding site. Catalysis depends on Ser511, which acts as the Proton acceptor.

This sequence belongs to the IlvD/Edd family. It depends on [2Fe-2S] cluster as a cofactor. Requires Mg(2+) as cofactor.

Its subcellular location is the mitochondrion. It catalyses the reaction (2R)-2,3-dihydroxy-3-methylbutanoate = 3-methyl-2-oxobutanoate + H2O. The catalysed reaction is (2R,3R)-2,3-dihydroxy-3-methylpentanoate = (S)-3-methyl-2-oxopentanoate + H2O. It functions in the pathway amino-acid biosynthesis; L-isoleucine biosynthesis; L-isoleucine from 2-oxobutanoate: step 3/4. Its pathway is amino-acid biosynthesis; L-valine biosynthesis; L-valine from pyruvate: step 3/4. In terms of biological role, dihydroxyacid dehydratase that catalyzes the third step in the common pathway leading to biosynthesis of branched-chain amino acids. Catalyzes the dehydration of (2R,3R)-2,3-dihydroxy-3-methylpentanoate (2,3-dihydroxy-3-methylvalerate) into 2-oxo-3-methylpentanoate (2-oxo-3-methylvalerate) and of (2R)-2,3-dihydroxy-3-methylbutanoate (2,3-dihydroxyisovalerate) into 2-oxo-3-methylbutanoate (2-oxoisovalerate), the penultimate precursor to L-isoleucine and L-valine, respectively. This chain is Dihydroxy-acid dehydratase, mitochondrial, found in Schizosaccharomyces pombe (strain 972 / ATCC 24843) (Fission yeast).